The primary structure comprises 502 residues: Probable glycine dehydrogenase (decarboxylating) subunit 2 (502 aa).

Lys273 is subject to N6-(pyridoxal phosphate)lysine.

It belongs to the GcvP family. C-terminal subunit subfamily. In terms of assembly, the glycine cleavage system is composed of four proteins: P, T, L and H. In this organism, the P 'protein' is a heterodimer of two subunits. The cofactor is pyridoxal 5'-phosphate.

It carries out the reaction N(6)-[(R)-lipoyl]-L-lysyl-[glycine-cleavage complex H protein] + glycine + H(+) = N(6)-[(R)-S(8)-aminomethyldihydrolipoyl]-L-lysyl-[glycine-cleavage complex H protein] + CO2. Its function is as follows. The glycine cleavage system catalyzes the degradation of glycine. The P protein binds the alpha-amino group of glycine through its pyridoxal phosphate cofactor; CO(2) is released and the remaining methylamine moiety is then transferred to the lipoamide cofactor of the H protein. This is Probable glycine dehydrogenase (decarboxylating) subunit 2 from Staphylococcus epidermidis (strain ATCC 35984 / DSM 28319 / BCRC 17069 / CCUG 31568 / BM 3577 / RP62A).